The primary structure comprises 437 residues: Dolichyl-diphosphooligosaccharide--protein glycosyltransferase 48 kDa subunit (437 aa).

Residues 1–24 (MVNLSRSVALISVFLLPLLSFSFS) form the signal peptide. The Lumenal segment spans residues 25–414 (VDNPTDRRVL…YERFIPTAYP (390 aa)). Residues 415–435 (YYGACFTTMAGFFVFSFVYLY) form a helical membrane-spanning segment. At 436–437 (HK) the chain is on the cytoplasmic side.

The protein belongs to the DDOST 48 kDa subunit family. In terms of assembly, component of the oligosaccharyltransferase (OST) complex.

The protein resides in the endoplasmic reticulum membrane. The protein operates within protein modification; protein glycosylation. In terms of biological role, subunit of the oligosaccharyl transferase (OST) complex that catalyzes the initial transfer of a defined glycan (Glc(3)Man(9)GlcNAc(2) in eukaryotes) from the lipid carrier dolichol-pyrophosphate to an asparagine residue within an Asn-X-Ser/Thr consensus motif in nascent polypeptide chains, the first step in protein N-glycosylation. N-glycosylation occurs cotranslationally and the complex associates with the Sec61 complex at the channel-forming translocon complex that mediates protein translocation across the endoplasmic reticulum (ER). All subunits are required for a maximal enzyme activity. The sequence is that of Dolichyl-diphosphooligosaccharide--protein glycosyltransferase 48 kDa subunit (OST48) from Arabidopsis thaliana (Mouse-ear cress).